An 89-amino-acid polypeptide reads, in one-letter code: Small ribosomal subunit protein uS14 (89 aa).

The protein belongs to the universal ribosomal protein uS14 family. Part of the 30S ribosomal subunit. Contacts proteins S3 and S10.

Binds 16S rRNA, required for the assembly of 30S particles and may also be responsible for determining the conformation of the 16S rRNA at the A site. This is Small ribosomal subunit protein uS14 from Deinococcus radiodurans (strain ATCC 13939 / DSM 20539 / JCM 16871 / CCUG 27074 / LMG 4051 / NBRC 15346 / NCIMB 9279 / VKM B-1422 / R1).